The following is a 275-amino-acid chain: 4-hydroxy-tetrahydrodipicolinate reductase (275 aa).

12–17 (GAAGRM) contributes to the NAD(+) binding site. Arginine 39 serves as a coordination point for NADP(+). NAD(+) is bound by residues 102–104 (GTT) and 126–129 (SGNM). The Proton donor/acceptor role is filled by histidine 160. Histidine 161 provides a ligand contact to (S)-2,3,4,5-tetrahydrodipicolinate. The Proton donor role is filled by lysine 164. 170–171 (GT) serves as a coordination point for (S)-2,3,4,5-tetrahydrodipicolinate.

The protein belongs to the DapB family.

It localises to the cytoplasm. The catalysed reaction is (S)-2,3,4,5-tetrahydrodipicolinate + NAD(+) + H2O = (2S,4S)-4-hydroxy-2,3,4,5-tetrahydrodipicolinate + NADH + H(+). It catalyses the reaction (S)-2,3,4,5-tetrahydrodipicolinate + NADP(+) + H2O = (2S,4S)-4-hydroxy-2,3,4,5-tetrahydrodipicolinate + NADPH + H(+). The protein operates within amino-acid biosynthesis; L-lysine biosynthesis via DAP pathway; (S)-tetrahydrodipicolinate from L-aspartate: step 4/4. Its function is as follows. Catalyzes the conversion of 4-hydroxy-tetrahydrodipicolinate (HTPA) to tetrahydrodipicolinate. The chain is 4-hydroxy-tetrahydrodipicolinate reductase from Agrobacterium fabrum (strain C58 / ATCC 33970) (Agrobacterium tumefaciens (strain C58)).